The sequence spans 421 residues: 4-hydroxy-3-methylbut-2-en-1-yl diphosphate synthase (flavodoxin) (421 aa).

Residues Cys-311, Cys-314, Cys-357, and Glu-364 each coordinate [4Fe-4S] cluster.

It belongs to the IspG family. It depends on [4Fe-4S] cluster as a cofactor.

The catalysed reaction is (2E)-4-hydroxy-3-methylbut-2-enyl diphosphate + oxidized [flavodoxin] + H2O + 2 H(+) = 2-C-methyl-D-erythritol 2,4-cyclic diphosphate + reduced [flavodoxin]. It functions in the pathway isoprenoid biosynthesis; isopentenyl diphosphate biosynthesis via DXP pathway; isopentenyl diphosphate from 1-deoxy-D-xylulose 5-phosphate: step 5/6. Its function is as follows. Converts 2C-methyl-D-erythritol 2,4-cyclodiphosphate (ME-2,4cPP) into 1-hydroxy-2-methyl-2-(E)-butenyl 4-diphosphate. This is 4-hydroxy-3-methylbut-2-en-1-yl diphosphate synthase (flavodoxin) from Xanthomonas campestris pv. campestris (strain 8004).